A 519-amino-acid polypeptide reads, in one-letter code: Mannuronan C5-epimerase (519 aa).

An N-terminal signal peptide occupies residues 1–25; the sequence is MNLHPHLRHSLLASALLLASGLATA. PbH1 repeat units follow at residues 219–246, 281–303, 305–328, 330–352, 354–376, and 377–399; these read GTETYIVNTKMASFGYAKSKSYGVSISQ, TQDFVIKDSTYRDNIVYGIDPHD, SHRLIIAGNTVYGTKKKHGIIVSR, VNDSWIINNKSYDNKLSGVVIDR, SVNNLVAYNEIYRNHTDGITLYE, and SGDNLIWGNKLVNNRRHGIRVRN. Histidine 302 acts as the Proton acceptor in catalysis.

Belongs to the D-mannuronate C5-epimerase family.

Its subcellular location is the periplasm. It carries out the reaction [(1-&gt;4)-beta-D-mannuronosyl](n) = [alginate](n). It participates in glycan biosynthesis; alginate biosynthesis. Functionally, catalyzes the epimerization of beta-D-mannuronate to alpha-L-guluronate during the synthesis of the linear polysaccharide alginate. In addition, is part of a periplasmic protein complex that protects alginate from degradation by AlgL by channeling the newly formed alginate polymer through a scaffold that transfers the alginate polymer through the periplasmic space to the outer membrane secretin AlgE. In Pseudomonas putida (strain ATCC 47054 / DSM 6125 / CFBP 8728 / NCIMB 11950 / KT2440), this protein is Mannuronan C5-epimerase (algG).